The primary structure comprises 200 residues: NADH-quinone oxidoreductase subunit C (200 aa).

Belongs to the complex I 30 kDa subunit family. As to quaternary structure, NDH-1 is composed of 14 different subunits. Subunits NuoB, C, D, E, F, and G constitute the peripheral sector of the complex.

Its subcellular location is the cell inner membrane. It carries out the reaction a quinone + NADH + 5 H(+)(in) = a quinol + NAD(+) + 4 H(+)(out). Functionally, NDH-1 shuttles electrons from NADH, via FMN and iron-sulfur (Fe-S) centers, to quinones in the respiratory chain. The immediate electron acceptor for the enzyme in this species is believed to be ubiquinone. Couples the redox reaction to proton translocation (for every two electrons transferred, four hydrogen ions are translocated across the cytoplasmic membrane), and thus conserves the redox energy in a proton gradient. The chain is NADH-quinone oxidoreductase subunit C from Burkholderia ambifaria (strain ATCC BAA-244 / DSM 16087 / CCUG 44356 / LMG 19182 / AMMD) (Burkholderia cepacia (strain AMMD)).